The primary structure comprises 463 residues: Casein kinase 1 (463 aa).

The 270-residue stretch at 9–278 (FKLGRKIGSG…LKRLFRDLFI (270 aa)) folds into the Protein kinase domain. ATP-binding positions include 15 to 23 (IGSGSFGEL) and Lys38. Residue Asp128 is the Proton acceptor of the active site. A compositionally biased stretch (polar residues) spans 296-306 (ESNRLRSSGRT). Positions 296-448 (ESNRLRSSGR…TARNVHDDPT (153 aa)) are disordered. A compositionally biased stretch (basic and acidic residues) spans 315 to 328 (ERTERAAARQDVPD). Polar residues-rich tracts occupy residues 376–396 (TSSS…SRPS) and 404–440 (NRSN…TKTA).

The protein belongs to the protein kinase superfamily. CK1 Ser/Thr protein kinase family. Casein kinase I subfamily. Monomer. Post-translationally, autophosphorylated. As to expression, expressed in leaves, stems, panicles and seeds. Expressed in root tissues and lamina joints.

The protein resides in the cytoplasm. It is found in the nucleus. It catalyses the reaction L-seryl-[protein] + ATP = O-phospho-L-seryl-[protein] + ADP + H(+). It carries out the reaction L-threonyl-[protein] + ATP = O-phospho-L-threonyl-[protein] + ADP + H(+). With respect to regulation, inhibited by N-(2-aminoethyl)-5-chloroisoquinoline-8-sulfonamide (CKI-7). Its function is as follows. Casein kinases are operationally defined by their preferential utilization of acidic proteins such as caseins as substrates. Can phosphorylate casein in vitro. Required for normal root development through modulation of cell elongation. Plants silencing CKI1 show abnormal root development, with reduced number of lateral and adventitious roots, and shortened primary roots as a result of reduced cell elongation. May be involved in abscisic acid (ABA) and brassinosteroid (BR) signaling pathways. Plays an important role in the adaptive growth and fitness under low temperature (LT) conditions. May confer tolerance to LT through an auxin-dependent process. The chain is Casein kinase 1 (CKI1) from Oryza sativa subsp. japonica (Rice).